A 367-amino-acid chain; its full sequence is MSLADSVLAVNNDLPIRTDSPVHSGKVRSVYWLTDADSRRLIKTKGYNVPEDTPLAIMVISDRISAFDCIFHGEGGLKGIPGKGAALNAISNHWFKLFAENGLADSHILDIPHPFVWIVQKARPIKVEAICRQYITGSMWRAYSKGERVFCGITLPEGLEKDQKLPDLLITPSTKGILTGIPGVPAQDDVNISRSDIEANYQAFGFEKLEDIDLYEKLLKDGFKVISKALADIDQVFVDTKFEFGYVTDKDGNSKLIYMDEVGTPDSSRIWDGAAYRDGKILENSKEGFRQFLLNHFPDPDVLLNKDRMPEREALARDNDLPLEAMMQVSRTYTGVAEKVTGAAIPLPANPKADIIKILREEYDLIL.

Belongs to the SAICAR synthetase family.

The enzyme catalyses 5-amino-1-(5-phospho-D-ribosyl)imidazole-4-carboxylate + L-aspartate + ATP = (2S)-2-[5-amino-1-(5-phospho-beta-D-ribosyl)imidazole-4-carboxamido]succinate + ADP + phosphate + 2 H(+). It functions in the pathway purine metabolism; IMP biosynthesis via de novo pathway; 5-amino-1-(5-phospho-D-ribosyl)imidazole-4-carboxamide from 5-amino-1-(5-phospho-D-ribosyl)imidazole-4-carboxylate: step 1/2. The chain is Phosphoribosylaminoimidazole-succinocarboxamide synthase from Shewanella putrefaciens (strain CN-32 / ATCC BAA-453).